A 358-amino-acid chain; its full sequence is UDP-N-acetylglucosamine--N-acetylmuramyl-(pentapeptide) pyrophosphoryl-undecaprenol N-acetylglucosamine transferase (358 aa).

Residues 11 to 13 (TGG), Asn-120, Arg-161, Ser-188, and Gln-282 each bind UDP-N-acetyl-alpha-D-glucosamine.

It belongs to the glycosyltransferase 28 family. MurG subfamily.

Its subcellular location is the cell inner membrane. It carries out the reaction di-trans,octa-cis-undecaprenyl diphospho-N-acetyl-alpha-D-muramoyl-L-alanyl-D-glutamyl-meso-2,6-diaminopimeloyl-D-alanyl-D-alanine + UDP-N-acetyl-alpha-D-glucosamine = di-trans,octa-cis-undecaprenyl diphospho-[N-acetyl-alpha-D-glucosaminyl-(1-&gt;4)]-N-acetyl-alpha-D-muramoyl-L-alanyl-D-glutamyl-meso-2,6-diaminopimeloyl-D-alanyl-D-alanine + UDP + H(+). Its pathway is cell wall biogenesis; peptidoglycan biosynthesis. In terms of biological role, cell wall formation. Catalyzes the transfer of a GlcNAc subunit on undecaprenyl-pyrophosphoryl-MurNAc-pentapeptide (lipid intermediate I) to form undecaprenyl-pyrophosphoryl-MurNAc-(pentapeptide)GlcNAc (lipid intermediate II). In Synechococcus sp. (strain CC9605), this protein is UDP-N-acetylglucosamine--N-acetylmuramyl-(pentapeptide) pyrophosphoryl-undecaprenol N-acetylglucosamine transferase.